Consider the following 177-residue polypeptide: Interleukin-1 receptor antagonist protein (177 aa).

A signal peptide spans M1–C25. C91 and C141 are disulfide-bonded. N109 carries an N-linked (GlcNAc...) asparagine glycan.

The protein belongs to the IL-1 family. The intracellular form of IL1RN is predominantly expressed in epithelial cells.

The protein localises to the secreted. Its subcellular location is the cytoplasm. In terms of biological role, anti-inflammatory antagonist of interleukin-1 family of proinflammatory cytokines such as interleukin-1beta/IL1B and interleukin-1alpha/IL1A. Protects from immune dysregulation and uncontrolled systemic inflammation triggered by IL1 for a range of innate stimulatory agents such as pathogens. The sequence is that of Interleukin-1 receptor antagonist protein (IL1RN) from Homo sapiens (Human).